The following is a 98-amino-acid chain: Protein E7 (98 aa).

M1 participates in a covalent cross-link: Peptide (Met-Gly) (interchain with G-Cter in ubiquitin); by host. Residues 1–41 are E7 terminal domain; it reads MRGNNPTLREYILDLHPEPTDLFCYEQLCDSSDEDEIGLDG. The LXCXE motif; interaction with host RB1 and TMEM173/STING motif lies at 22–26; that stretch reads LFCYE. Residues 59 to 95 fold into a zinc finger; that stretch reads CYTCGTTVRLCINSTTTDVRTLQQLLMGTCTIVCPSC. A Nuclear export signal motif is present at residues 77-85; sequence VRTLQQLLM.

Belongs to the papillomaviridae E7 protein family. Homodimer. Homooligomer. Interacts with host RB1; this interaction induces dissociation of RB1-E2F1 complex thereby disrupting RB1 activity. Interacts with host EP300; this interaction represses EP300 transcriptional activity. Interacts with protein E2; this interaction inhibits E7 oncogenic activity. Interacts with host TMEM173/STING; this interaction impairs the ability of TMEM173/STING to sense cytosolic DNA and promote the production of type I interferon (IFN-alpha and IFN-beta). In terms of processing, highly phosphorylated.

The protein resides in the host cytoplasm. Its subcellular location is the host nucleus. Functionally, plays a role in viral genome replication by driving entry of quiescent cells into the cell cycle. Stimulation of progression from G1 to S phase allows the virus to efficiently use the cellular DNA replicating machinery to achieve viral genome replication. E7 protein has both transforming and trans-activating activities. Induces the disassembly of the E2F1 transcription factor from RB1, with subsequent transcriptional activation of E2F1-regulated S-phase genes. Interferes with host histone deacetylation mediated by HDAC1 and HDAC2, leading to transcription activation. Also plays a role in the inhibition of both antiviral and antiproliferative functions of host interferon alpha. Interaction with host TMEM173/STING impairs the ability of TMEM173/STING to sense cytosolic DNA and promote the production of type I interferon (IFN-alpha and IFN-beta). The protein is Protein E7 of Homo sapiens (Human).